Consider the following 345-residue polypeptide: N-acetyl-gamma-glutamyl-phosphate reductase (345 aa).

Residue C153 is part of the active site.

The protein belongs to the NAGSA dehydrogenase family. Type 1 subfamily.

Its subcellular location is the cytoplasm. The enzyme catalyses N-acetyl-L-glutamate 5-semialdehyde + phosphate + NADP(+) = N-acetyl-L-glutamyl 5-phosphate + NADPH + H(+). It functions in the pathway amino-acid biosynthesis; L-arginine biosynthesis; N(2)-acetyl-L-ornithine from L-glutamate: step 3/4. Catalyzes the NADPH-dependent reduction of N-acetyl-5-glutamyl phosphate to yield N-acetyl-L-glutamate 5-semialdehyde. This Methylacidiphilum infernorum (isolate V4) (Methylokorus infernorum (strain V4)) protein is N-acetyl-gamma-glutamyl-phosphate reductase.